The sequence spans 1503 residues: Rho GTPase-activating protein 5 (1503 aa).

FF domains lie at 267–325 (QLVV…HIEQ), 366–420 (KLME…HVQH), 427–481 (RIEM…HQRE), and 482–548 (IVEK…HIGF). Y550 carries the post-translational modification 3'-nitrotyrosine. A phosphoserine mark is found at S590 and S765. The pG1 pseudoGTPase domain maps to 590-763 (STNIDKVNLF…LESVKHNLDV (174 aa)). The region spanning 779 to 944 (RIVMCAMCGD…FSDVLEKKNM (166 aa)) is the pG2 pseudoGTPase domain. S951 and S968 each carry phosphoserine. 3 disordered regions span residues 975 to 1004 (YNNYPDSDDDTEAPPPYSPIGDDVQLLPTP), 1022 to 1050 (HSTPNCHDHERNHKVPPPIKPKPVVPKTN), and 1069 to 1091 (NPRKQTSRVPLAHPEDMDSSDNY). Positions 1036-1045 (VPPPIKPKPV) are enriched in pro residues. Position 1115 is a phosphoserine (S1115). Disordered stretches follow at residues 1129 to 1157 (NTQGDEENGFSDRTSKGHGERRPSKYKYK) and 1169 to 1255 (YRRT…TRRN). The segment covering 1141-1151 (RTSKGHGERRP) has biased composition (basic and acidic residues). Residues S1196, S1203, and S1219 each carry the phosphoserine modification. The Rho-GAP domain maps to 1263–1450 (MPLQDLVTAE…TFIQQCQFFF (188 aa)).

May interact with RASA1/p120GAP. In terms of tissue distribution, expressed in spinal cord, cerebellum, kidney, testis and lung.

The protein resides in the cytoplasm. Its subcellular location is the cell membrane. In terms of biological role, GTPase-activating protein for Rho family members. The polypeptide is Rho GTPase-activating protein 5 (Arhgap5) (Mus musculus (Mouse)).